We begin with the raw amino-acid sequence, 623 residues long: ATP-dependent lipid A-core flippase (623 aa).

The next 5 membrane-spanning stretches (helical) occupy residues 66-86 (LVLAVLLMAGAAATQPTLAVI), 103-123 (VWFLPLAVVGLILLRGICNFF), 190-210 (LVVIALIGVLLYMSWALTLII), 290-310 (LTPLTQVCISVAVGAVIAVAL), and 317-337 (ALTVGSFASFMAALAQIFDPI). The 283-residue stretch at 67-349 (VLAVLLMAGA…LTNLAGKMQK (283 aa)) folds into the ABC transmembrane type-1 domain. An ABC transporter domain is found at 382-618 (VEFRAVSHRF…NGLYASLYNM (237 aa)). 416–423 (GRSGSGKT) is an ATP binding site.

This sequence belongs to the ABC transporter superfamily. Lipid exporter (TC 3.A.1.106) family. Homodimer.

The protein localises to the cell inner membrane. It catalyses the reaction ATP + H2O + lipid A-core oligosaccharideSide 1 = ADP + phosphate + lipid A-core oligosaccharideSide 2.. Functionally, involved in lipopolysaccharide (LPS) biosynthesis. Translocates lipid A-core from the inner to the outer leaflet of the inner membrane. Transmembrane domains (TMD) form a pore in the inner membrane and the ATP-binding domain (NBD) is responsible for energy generation. This chain is ATP-dependent lipid A-core flippase, found in Bordetella pertussis (strain Tohama I / ATCC BAA-589 / NCTC 13251).